The following is an 81-amino-acid chain: ATP synthase subunit c (81 aa).

A run of 2 helical transmembrane segments spans residues 7–27 and 57–77; these read AASV…PGLG and LAFM…LLFA.

The protein belongs to the ATPase C chain family. In terms of assembly, F-type ATPases have 2 components, F(1) - the catalytic core - and F(0) - the membrane proton channel. F(1) has five subunits: alpha(3), beta(3), gamma(1), delta(1), epsilon(1). F(0) has four main subunits: a(1), b(1), b'(1) and c(10-14). The alpha and beta chains form an alternating ring which encloses part of the gamma chain. F(1) is attached to F(0) by a central stalk formed by the gamma and epsilon chains, while a peripheral stalk is formed by the delta, b and b' chains.

It is found in the cellular thylakoid membrane. F(1)F(0) ATP synthase produces ATP from ADP in the presence of a proton or sodium gradient. F-type ATPases consist of two structural domains, F(1) containing the extramembraneous catalytic core and F(0) containing the membrane proton channel, linked together by a central stalk and a peripheral stalk. During catalysis, ATP synthesis in the catalytic domain of F(1) is coupled via a rotary mechanism of the central stalk subunits to proton translocation. Its function is as follows. Key component of the F(0) channel; it plays a direct role in translocation across the membrane. A homomeric c-ring of between 10-14 subunits forms the central stalk rotor element with the F(1) delta and epsilon subunits. This chain is ATP synthase subunit c, found in Synechococcus sp. (strain JA-3-3Ab) (Cyanobacteria bacterium Yellowstone A-Prime).